Reading from the N-terminus, the 622-residue chain is Dynein axonemal assembly factor 1 (622 aa).

Polar residues predominate over residues 1 to 11; sequence MHPEVSEQQAD. Residues 1–80 are disordered; that stretch reads MHPEVSEQQA…ARNDRDDRGP (80 aa). Residues 32–42 show a composition bias toward basic and acidic residues; it reads VRKEEINETKE. The span at 48-59 shows a compositional bias: low complexity; it reads STTSCQSQKQQS. Basic and acidic residues predominate over residues 62–80; sequence SRLDCRSGYARNDRDDRGP. LRR repeat units follow at residues 101 to 123, 124 to 145, 146 to 167, 168 to 189, 190 to 211, and 215 to 236; these read ALND…EEYT, GLRC…QAQS, ELRC…EPLQ, KLDA…SCLP, VLNT…QHLR, and RLCV…SVLE. The region spanning 249–288 is the LRRCT domain; it reads NPVTKHIPNYRRTVTVRLKQLTYLDDRPVFPKDRACAEAW. The span at 326–336 shows a compositional bias: basic and acidic residues; the sequence is EERKKARDKGE. 2 disordered regions span residues 326-360 and 399-431; these read EERK…PLGE and EEPD…TDGT. Low complexity-rich tracts occupy residues 337–351 and 415–428; these read TPLP…TSPE and VATA…VAAT. A Phosphoserine modification is found at Ser349. Ser464 and Ser487 each carry phosphoserine. Disordered stretches follow at residues 480–503 and 525–622; these read ISSL…EHTP and RVPL…FGLD. Polar residues predominate over residues 539-550; the sequence is APETQGQVFSTT.

This sequence belongs to the DNAAF1 family.

It is found in the cell projection. Its subcellular location is the cilium. Its function is as follows. Cilium-specific protein required for the stability of the ciliary architecture. Plays a role in cytoplasmic preassembly of dynein arms. Involved in regulation of microtubule-based cilia and actin-based brush border microvilli. This Peromyscus polionotus (Oldfield mouse) protein is Dynein axonemal assembly factor 1 (Dnaaf1).